Reading from the N-terminus, the 553-residue chain is Putative ABC transporter ATP-binding protein BCE_3323 (553 aa).

2 consecutive ABC transporter domains span residues 7–245 (AEIN…FRPF) and 295–527 (LSAE…SINR). ATP contacts are provided by residues 41-48 (GGSGSGKT) and 329-336 (GKNGTGKS).

Belongs to the ABC transporter superfamily.

It is found in the cell membrane. Functionally, probably part of an ABC transporter complex. Responsible for energy coupling to the transport system. This Bacillus cereus (strain ATCC 10987 / NRS 248) protein is Putative ABC transporter ATP-binding protein BCE_3323.